Consider the following 453-residue polypeptide: DDB1- and CUL4-associated factor 12 (453 aa).

Basic residues predominate over residues 1-12 (MARKVVSRKRKA). The tract at residues 1–34 (MARKVVSRKRKAPASPGAGSDAQGPQFGWDHSLH) is disordered. The segment at 1–38 (MARKVVSRKRKAPASPGAGSDAQGPQFGWDHSLHKRKR) is required for nuclear location and interaction with MOV10. Residue serine 15 is modified to Phosphoserine. WD repeat units lie at residues 81 to 122 (EREF…TSQI), 123 to 175 (TKIP…TLDP), 176 to 242 (VCVG…ALKD), 243 to 286 (IPKE…NTLS), 287 to 331 (KLLS…SYNV), and 332 to 366 (KSVCSRERGSGIRSVSFYEHIITVGTGQGSLLFYD).

This sequence belongs to the WD repeat DCAF12 family. Component of the DCX(DCAF12) E3 ubiquitin ligase complex, at least composed of CUL4 (CUL4A or CUL4B), DDB1, DCAF12 and RBX1. As to expression, highly expressed in lung cancer tissues and some cancer cell lines. Restricted expression in normal testis.

The protein resides in the cytoplasm. It localises to the cytoskeleton. It is found in the microtubule organizing center. The protein localises to the centrosome. Its subcellular location is the nucleus. It functions in the pathway protein modification; protein ubiquitination. Substrate-recognition component of a DCX (DDB1-CUL4-X-box) E3 ubiquitin-protein ligase complex of the DesCEND (destruction via C-end degrons) pathway, which recognizes a C-degron located at the extreme C terminus of target proteins, leading to their ubiquitination and degradation. The C-degron recognized by the DesCEND pathway is usually a motif of less than ten residues and can be present in full-length proteins, truncated proteins or proteolytically cleaved forms. The DCX(DCAF12) complex specifically recognizes proteins with a diglutamate (Glu-Glu) at the C-terminus, such as MAGEA3, MAGEA6 and CCT5, leading to their ubiquitination and degradation. Ubiquitination of MAGEA3, MAGEA6 by DCX(DCAF12) complex is required for starvation-induced autophagy. Also directly recognizes the C-terminal glutamate-leucine (Glu-Leu) degron as an alternative degron in proteins such as MOV10, leading to their ubiquitination and degradation. Controls the protein level of MOV10 during spermatogenesis and in T cells, especially after their activation. In Homo sapiens (Human), this protein is DDB1- and CUL4-associated factor 12.